Reading from the N-terminus, the 300-residue chain is Porphobilinogen deaminase (300 aa).

Residue C242 is modified to S-(dipyrrolylmethanemethyl)cysteine.

This sequence belongs to the HMBS family. In terms of assembly, monomer. Dipyrromethane serves as cofactor.

It catalyses the reaction 4 porphobilinogen + H2O = hydroxymethylbilane + 4 NH4(+). The protein operates within porphyrin-containing compound metabolism; protoporphyrin-IX biosynthesis; coproporphyrinogen-III from 5-aminolevulinate: step 2/4. Functionally, tetrapolymerization of the monopyrrole PBG into the hydroxymethylbilane pre-uroporphyrinogen in several discrete steps. This chain is Porphobilinogen deaminase, found in Rickettsia bellii (strain OSU 85-389).